We begin with the raw amino-acid sequence, 224 residues long: Peroxiredoxin-6 (224 aa).

A Thioredoxin domain is found at 5–169 (LLLGDVAPNF…ILRVVISLQL (165 aa)). Residues 31-40 (DSWGILFSHP) form a required and sufficient for targeting to lysosomes and lamellar bodies region. Residue Thr-44 is modified to Phosphothreonine. Residue Cys-47 is the Cysteine sulfenic acid (-SOH) intermediate; for peroxidase activity of the active site. Lys-63 is modified (N6-acetyllysine). Tyr-89 bears the Phosphotyrosine mark. Asp-140 acts as the For phospholipase activity in catalysis. Thr-177 is modified (phosphothreonine; by MAPK). Lys-209 carries the post-translational modification N6-acetyllysine; alternate. N6-succinyllysine; alternate is present on Lys-209.

This sequence belongs to the peroxiredoxin family. Prx6 subfamily. As to quaternary structure, homodimer. Interacts with GSTP1; mediates PRDX6 glutathionylation and regeneration. Interacts with APEX1. Interacts with STH. May interact with FAM168B. May interact with HTR2A. In terms of processing, irreversibly inactivated by overoxidation of Cys-47 to sulfinic acid (Cys-SO(2)H) and sulfonic acid (Cys-SO(3)H) forms upon oxidative stress. Post-translationally, phosphorylation at Thr-177 by MAP kinases increases the phospholipase activity of the enzyme. The phosphorylated form exhibits a greater lysophosphatidylcholine acyltransferase activity compared to the non-phosphorylated form.

The protein localises to the cytoplasm. It is found in the lysosome. The catalysed reaction is a hydroperoxide + 2 glutathione = an alcohol + glutathione disulfide + H2O. It carries out the reaction a 1,2-diacyl-sn-glycero-3-phosphocholine + H2O = a 1-acyl-sn-glycero-3-phosphocholine + a fatty acid + H(+). It catalyses the reaction a 1-acyl-sn-glycero-3-phosphocholine + an acyl-CoA = a 1,2-diacyl-sn-glycero-3-phosphocholine + CoA. The enzyme catalyses 1-hexadecanoyl-sn-glycero-3-phosphocholine + hexadecanoyl-CoA = 1,2-dihexadecanoyl-sn-glycero-3-phosphocholine + CoA. The catalysed reaction is 1,2-dihexadecanoyl-sn-glycero-3-phosphocholine + H2O = 1-hexadecanoyl-sn-glycero-3-phosphocholine + hexadecanoate + H(+). With respect to regulation, MJ33 or lithium;[(2R)-1-hexadecoxy-3-(2,2,2-trifluoroethoxy)propan-2-yl] methyl phosphate inhibits its phospholipase A2 activity. CI-976 or 2,2-Dimethyl-N-(2,4,6-trimethoxyphenyl)dodecanamide inhibits its lysophosphatidylcholine acyltransferase activity. Functionally, thiol-specific peroxidase that catalyzes the reduction of hydrogen peroxide and organic hydroperoxides to water and alcohols, respectively. Can reduce H(2)O(2) and short chain organic, fatty acid, and phospholipid hydroperoxides. Also has phospholipase activity, can therefore either reduce the oxidized sn-2 fatty acyl group of phospholipids (peroxidase activity) or hydrolyze the sn-2 ester bond of phospholipids (phospholipase activity). These activities are dependent on binding to phospholipids at acidic pH and to oxidized phospholipds at cytosolic pH. Plays a role in cell protection against oxidative stress by detoxifying peroxides and in phospholipid homeostasis. Exhibits acyl-CoA-dependent lysophospholipid acyltransferase which mediates the conversion of lysophosphatidylcholine (1-acyl-sn-glycero-3-phosphocholine or LPC) into phosphatidylcholine (1,2-diacyl-sn-glycero-3-phosphocholine or PC). Shows a clear preference for LPC as the lysophospholipid and for palmitoyl CoA as the fatty acyl substrate. The chain is Peroxiredoxin-6 (PRDX6) from Homo sapiens (Human).